The primary structure comprises 977 residues: MAATMIFGSFTHDLLGKAMSTIHSAVTAEKDIFSSIKERLERKRHGKICRMKNGSIYIKAASSTKVEKINAAAKKLADDKAAFLKAQPTIVDKIIVNEKIQVVEAEEVHKREDVQTVFFKKTKKRAPKLRATCSSSGLDNLYNAVANIAKASSLRVEVIHKKRVCGEFKQTRFGRALFIDVAHAKGHRRRIDCRMHRREQRTMHMFMRKTTKTEVRSKHLRKGDSGIVLLTQKIKGHLSGVRDEFFIVRGTCDDSLLEARARFSQSITLRATHFSTGDIFWKGFNASFQEQKAIGLDHTCTSDLPVEACGHVAALMCQSLFPCGKITCKRCIANLSNLDFDTFSELQGDRAMRILDVMRARFPSFTHTIRFLHDLFTQRRVTNPNTAAFREILRLIGDRNEAPFAHVNRLNEILLLGSKANPDSLAKASDSLLELARYLNNRTENIRNGSLKHFRNKISSKAHSNLALSCDNQLDQNGNFLWGLAGIAAKRFLNNYFETIDPEQGYDKYVIRKNPNGERKLAIGNFIISTNLEKLRDQLEGESIARVGITEECVSRKDGNYRYPCCCVTLEDGSPMYSELKMPTKNHLVIGNSGDPKYLDLPGEISNLMYIAKEGYCYINIFLAMLVNVDEANAKDFTKRVRDESVQKLGKWPSLIDVATECALLSTYYPAAASAELPRLLVDHAQKTIHVVDSYGSLNTGYHILKANTVSQLEKFASNTLESPMAQYKVGGLVYSENNDASAVKALTQAIFRPDVLSELIEKEPYLMVFALVSPGILMAMSNSGALEFGISKWISSDHSLVRMASILKTLASKVSVADTLALQKHIMRQNANFLCGELINGFQKKKSYTHATRFLLMISEENEMDDPVLNAGYRVLEASSHEIMEKNLSRTVRDILVRLKLVWKIQVNLVYAKALWKIQSRIVPKRADRLARTLQQLVAVSLPEYAQALEKQGESVSRKIFGKHFKCKTQDNMCSF.

The Peptidase S30 domain maps to 132–274 (TCSSSGLDNL…QSITLRATHF (143 aa)). Residues His-183, Asp-192, and Ser-225 each act as for P1 proteinase activity in the active site. The Involved in interaction with stylet and aphid transmission signature appears at 325-328 (KITC). The short motif at 583–585 (PTK) is the Involved in virions binding and aphid transmission element. One can recognise a Peptidase C6 domain in the interval 609–731 (MYIAKEGYCY…ESPMAQYKVG (123 aa)). Active-site for helper component proteinase activity residues include Cys-617 and His-690.

It belongs to the potyviridae P3N-PIPO polyprotein family. Interacts (via PIPO domain) with host PCaP1 protein; this interaction may help to anchor the movement complex to the plasma membrane from which the complex could move to the plasmodesmata. Post-translationally, potyviral RNA is expressed as two polyproteins which undergo post-translational proteolytic processing. Genome polyprotein is processed by NIa-pro, P1 and HC-pro proteinases resulting in the production of at least ten individual proteins. P3N-PIPO is cleaved by P1 and HC-pro proteinases resulting in the production of three individual proteins. The P1 proteinase and the HC-pro cleave only their respective C-termini autocatalytically.

Its subcellular location is the host cell junction. The protein resides in the host plasmodesma. It carries out the reaction Hydrolyzes a Gly-|-Gly bond at its own C-terminus, commonly in the sequence -Tyr-Xaa-Val-Gly-|-Gly, in the processing of the potyviral polyprotein.. Required for aphid transmission and also has proteolytic activity. Only cleaves a Gly-Gly dipeptide at its own C-terminus. Interacts with virions and aphid stylets. Acts as a suppressor of RNA-mediated gene silencing, also known as post-transcriptional gene silencing (PTGS), a mechanism of plant viral defense that limits the accumulation of viral RNAs. May have RNA-binding activity. In terms of biological role, allows efficient cell to cell propagation, by bypassing the host cell wall barrier. Transports viral genome to neighboring plant cells directly through plasmosdesmata, without any budding. The chain is P3N-PIPO polyprotein from Nicotiana tabacum (Common tobacco).